Here is a 118-residue protein sequence, read N- to C-terminus: Large ribosomal subunit protein bL20 (118 aa).

The protein belongs to the bacterial ribosomal protein bL20 family.

In terms of biological role, binds directly to 23S ribosomal RNA and is necessary for the in vitro assembly process of the 50S ribosomal subunit. It is not involved in the protein synthesizing functions of that subunit. The polypeptide is Large ribosomal subunit protein bL20 (Ralstonia pickettii (strain 12J)).